The chain runs to 147 residues: uncharacterized protein (147 aa).

One can recognise an HTH asnC-type domain in the interval 2-63 (LDELDKKIIG…KLNYENIGYD (62 aa)). The segment at residues 21–40 (YREIAKELNVAVGTIYNRIK) is a DNA-binding region (H-T-H motif).

This is an uncharacterized protein from Pyrococcus abyssi (strain GE5 / Orsay).